Here is a 390-residue protein sequence, read N- to C-terminus: Protein dimmed (390 aa).

The disordered stretch occupies residues 24-163; it reads HNNNNYNTDG…RNMRRLESNE (140 aa). Composition is skewed to polar residues over residues 29–44 and 55–64; these read YNTD…SAEG and RTSQLSNNTY. Asn61 carries an N-linked (GlcNAc...) asparagine glycan. Residues 69-78 are compositionally biased toward low complexity; the sequence is TDSSSQSDDT. The span at 79-90 shows a compositional bias: gly residues; the sequence is SGGGGSSNGGGS. Residues 122–141 are compositionally biased toward low complexity; that stretch reads PSTIAPNSTSSNSSNANGNA. Residues Asn128, Asn133, and Asn140 are each glycosylated (N-linked (GlcNAc...) asparagine). Over residues 151-163 the composition is skewed to basic and acidic residues; that stretch reads AKERNMRRLESNE. The region spanning 156–208 is the bHLH domain; sequence MRRLESNERERMRMHSLNDAFQSLREVIPHVEMERRLSKIETLTLAKNYIINL. N-linked (GlcNAc...) asparagine glycosylation is found at Asn207 and Asn237. A disordered region spans residues 312-339; sequence QQQQASHLPHHQQAMHGHGHLGASIQSQ. A glycan (N-linked (GlcNAc...) asparagine) is linked at Asn347.

Forms homodimers via the bHLH domain. These dimers bind the core E-box sequence. Detected in the developing nervous system in the bilateral domains in the cephalic region that later on forms part of the ring gland. Concomitantly expressed in the larval central nervous system (CNS), including the dorsal chain neurons as well as several bilateral clusters of neurons: large, midline protocerebral brain cells (MC), lateral protocerebral brain cells (LC), ventral subesophageal neurons (SE) and lateral abdominal neurons, and the transverse nerves. Outside the CNS, detected in at least three classes of endocrine cells: intrinsic cells of the corpora cardiaca, midgut cells, the Inka cells, lateral Bipolar neurons associated with the segmental transverse nerve, and several peptidergic cells of the enteric nervous system. Expressed only in central and peripheral neuroendocrine secretory cells and neurosecretory neurons but not in sensory or motor neurons.

The protein resides in the cytoplasm. Functionally, transcription factor that regulates neurosecretory (NS) cell function and neuroendocrine cell fate. Acts as a master regulator of common NS functions such as Phm expression and neuropeptide production. Plays a role as a regulator of peptide-containing large dense-core vesicle (LDCV) production and peptidergic cell differentiation. Controls transcription of FMRFamide in Tv neuronal cells and Fur1 in Ap-let cells (Tvb and dorsal apterous cells). Also required for up-regulation of Phm in Tv and Ap-let cells, and expression of three neuropeptide genes, Ms, FMRFamide and Lk. Influences both regulated and constitutive secretory activity in neuroendocrine cells at embryonic and postembryonic level. Loss of function studies show reduced cellular levels of various neuropeptides and neuropeptide biosynthetic enzymes. This is Protein dimmed (dimm) from Drosophila melanogaster (Fruit fly).